The following is a 959-amino-acid chain: DNA polymerase 1 (959 aa).

Residues 1–110 (MRVRGGQEAA…LTLEPSPQSE (110 aa)) are disordered. Positions 44–60 (KKPEPPPTLHREREPES) are enriched in basic and acidic residues.

Belongs to the DNA polymerase type-B family.

It carries out the reaction DNA(n) + a 2'-deoxyribonucleoside 5'-triphosphate = DNA(n+1) + diphosphate. This Aeropyrum pernix (strain ATCC 700893 / DSM 11879 / JCM 9820 / NBRC 100138 / K1) protein is DNA polymerase 1 (polA).